Consider the following 426-residue polypeptide: Serine/threonine-protein kinase SRPK (426 aa).

The span at 1-23 (MENIFKEKEKGKEKAKEEEKEND) shows a compositional bias: basic and acidic residues. The tract at residues 1-40 (MENIFKEKEKGKEKAKEEEKENDSGDLFDSEDEGTEDYKK) is disordered. Residues 24 to 35 (SGDLFDSEDEGT) show a composition bias toward acidic residues. Positions 56–419 (YRIVKKLGWG…ARDSLEHPYM (364 aa)) constitute a Protein kinase domain. ATP-binding positions include 62–70 (LGWGHFSTV) and Lys86. Residue Asp188 is the Proton acceptor of the active site. Residues 318–328 (PKKGDKYDKTD) carry the Nuclear localization signal motif.

This sequence belongs to the protein kinase superfamily. CMGC Ser/Thr protein kinase family.

The protein localises to the nucleus. It catalyses the reaction L-seryl-[protein] + ATP = O-phospho-L-seryl-[protein] + ADP + H(+). The enzyme catalyses L-threonyl-[protein] + ATP = O-phospho-L-threonyl-[protein] + ADP + H(+). Phosphorylates serine/arginine-rich protein PSR. The protein is Serine/threonine-protein kinase SRPK of Physarum polycephalum (Slime mold).